The following is a 197-amino-acid chain: Imidazoleglycerol-phosphate dehydratase (197 aa).

The protein belongs to the imidazoleglycerol-phosphate dehydratase family.

Its subcellular location is the cytoplasm. It carries out the reaction D-erythro-1-(imidazol-4-yl)glycerol 3-phosphate = 3-(imidazol-4-yl)-2-oxopropyl phosphate + H2O. It participates in amino-acid biosynthesis; L-histidine biosynthesis; L-histidine from 5-phospho-alpha-D-ribose 1-diphosphate: step 6/9. The polypeptide is Imidazoleglycerol-phosphate dehydratase (Bradyrhizobium sp. (strain ORS 278)).